We begin with the raw amino-acid sequence, 172 residues long: Large ribosomal subunit protein uL10 (172 aa).

This sequence belongs to the universal ribosomal protein uL10 family. Part of the ribosomal stalk of the 50S ribosomal subunit. The N-terminus interacts with L11 and the large rRNA to form the base of the stalk. The C-terminus forms an elongated spine to which L12 dimers bind in a sequential fashion forming a multimeric L10(L12)X complex.

In terms of biological role, forms part of the ribosomal stalk, playing a central role in the interaction of the ribosome with GTP-bound translation factors. In Francisella tularensis subsp. tularensis (strain FSC 198), this protein is Large ribosomal subunit protein uL10.